We begin with the raw amino-acid sequence, 473 residues long: Phosphatidylserine synthase 1 (473 aa).

An N-acetylalanine modification is found at A2. Topologically, residues 2–35 (ASCVGSRTLSKDDVNYKMHFRMINEQQVEDITID) are cytoplasmic. A helical membrane pass occupies residues 36–56 (FFYRPHTITLLSFTIVSLMYF). Topologically, residues 57–72 (AFTRDDSVPEDNIWRG) are lumenal. The helical transmembrane segment at 73–93 (ILSVIFFFLIISVLAFPNGPF) threads the bilayer. Residues 94–102 (TRPHPALWR) are Cytoplasmic-facing. A helical membrane pass occupies residues 103-123 (MVFGLSVLYFLFLVFLLFLNF). The Lumenal segment spans residues 124 to 186 (EQVKSLMYWL…AMKALLIRSY (63 aa)). Residues 187–207 (GLCWTISITWELTELFFMHLL) traverse the membrane as a helical segment. Over 208-216 (PNFAECWWD) the chain is Cytoplasmic. The chain crosses the membrane as a helical span at residues 217–237 (QVILDILLCNGGGIWLGMVVC). Residues 238–286 (RFLEMRTYHWASFKDIHTTTGKIKRAVLQFTPASWTYVRWFDPKSSFQR) lie on the Lumenal side of the membrane. Residues 287–307 (VAGIYLFMIIWQLTELNTFFL) traverse the membrane as a helical segment. The Cytoplasmic segment spans residues 308-319 (KHIFVFQASHPL). The chain crosses the membrane as a helical span at residues 320 to 342 (SWCRILFIGGITAPTVRQYYAYL). Residues 343 to 355 (TDTQCKRVGTQCW) are Lumenal-facing. A helical transmembrane segment spans residues 356–376 (VFGVIGFLEAIVCIKFGQDLF). Over 377 to 383 (SKTQILY) the chain is Cytoplasmic. Residues 384–404 (VVLWLLCVAFTTFLCLYGMVW) form a helical membrane-spanning segment. Residues 405-473 (YAEHYGHREK…SKVTNGVGKK (69 aa)) lie on the Lumenal side of the membrane. 3 positions are modified to phosphoserine: S417, S425, and S454. The interval 427 to 473 (DISWPHGKGSKGSEDGPHKHPGNSESHSSRRRNRHSKSKVTNGVGKK) is disordered. The span at 455–464 (SRRRNRHSKS) shows a compositional bias: basic residues.

This sequence belongs to the phosphatidyl serine synthase family.

The protein resides in the endoplasmic reticulum membrane. The enzyme catalyses a 1,2-diacyl-sn-glycero-3-phosphoethanolamine + L-serine = a 1,2-diacyl-sn-glycero-3-phospho-L-serine + ethanolamine. The catalysed reaction is a 1,2-diacyl-sn-glycero-3-phosphocholine + L-serine = a 1,2-diacyl-sn-glycero-3-phospho-L-serine + choline. It functions in the pathway phospholipid metabolism; phosphatidylserine biosynthesis. Catalyzes a base-exchange reaction in which the polar head group of phosphatidylethanolamine (PE) or phosphatidylcholine (PC) is replaced by L-serine. Catalyzes mainly the conversion of phosphatidylcholine but also converts, in vitro and to a lesser extent, phosphatidylethanolamine. This is Phosphatidylserine synthase 1 (PTDSS1) from Bos taurus (Bovine).